A 506-amino-acid chain; its full sequence is Aspartic proteinase A1 (506 aa).

The signal sequence occupies residues 1-24; that stretch reads MKIYSRTVAVSLIVSFLLCFSAFA. Positions 25-64 are cleaved as a propeptide — activation peptide; it reads ERNDGTFRVGLKKLKLDSKNRLAARVESKQEKPLRAYRLG. The region spanning 82-503 is the Peptidase A1 domain; that stretch reads YYGEIAIGTP…DFGNEQVGFA (422 aa). Aspartate 100 is an active-site residue. 2 disulfides stabilise this stretch: cysteine 113–cysteine 119 and cysteine 278–cysteine 282. Aspartate 287 is a catalytic residue. The region spanning 312–417 is the Saposin B-type domain; that stretch reads VVSQQCKTVV…NELCERLPSP (106 aa). Cystine bridges form between cysteine 317-cysteine 411, cysteine 342-cysteine 383, cysteine 348-cysteine 380, and cysteine 425-cysteine 462. An N-linked (GlcNAc...) asparagine glycan is attached at asparagine 397.

It belongs to the peptidase A1 family. Expressed in roots, leaves, stems, petals, carpels, seed pods and dry seeds.

It localises to the vacuole. Involved in the breakdown of propeptides of storage proteins in protein-storage vacuoles. Possesses aspartic protease activity in vitro. This chain is Aspartic proteinase A1 (APA1), found in Arabidopsis thaliana (Mouse-ear cress).